We begin with the raw amino-acid sequence, 831 residues long: DNA ligase (831 aa).

NAD(+) is bound by residues 34–38 (DADYD), 83–84 (SL), and Glu114. Residue Lys116 is the N6-AMP-lysine intermediate of the active site. NAD(+) contacts are provided by Arg137, Glu174, Lys291, and Lys315. Cys409, Cys412, Cys427, and Cys433 together coordinate Zn(2+). A BRCT domain is found at 749–831 (AHTAPLNGQS…LAFLGQYSAQ (83 aa)).

The protein belongs to the NAD-dependent DNA ligase family. LigA subfamily. The cofactor is Mg(2+). Mn(2+) is required as a cofactor.

The catalysed reaction is NAD(+) + (deoxyribonucleotide)n-3'-hydroxyl + 5'-phospho-(deoxyribonucleotide)m = (deoxyribonucleotide)n+m + AMP + beta-nicotinamide D-nucleotide.. DNA ligase that catalyzes the formation of phosphodiester linkages between 5'-phosphoryl and 3'-hydroxyl groups in double-stranded DNA using NAD as a coenzyme and as the energy source for the reaction. It is essential for DNA replication and repair of damaged DNA. This Xylella fastidiosa (strain 9a5c) protein is DNA ligase.